The sequence spans 338 residues: tRNA methyltransferase 10 homolog A (338 aa).

Disordered stretches follow at residues 1–91 and 296–338; these read MSSE…DRKR and RVEG…SVPH. S22 carries the phosphoserine modification. Residues 52–80 are a coiled coil; it reads KQWEEQRELRKQKRKEKRKRKQLERQCQP. The segment covering 61–73 has biased composition (basic residues); sequence RKQKRKEKRKRKQ. The 192-residue stretch at 88 to 279 folds into the SAM-dependent MTase TRM10-type domain; that stretch reads DRKRIRRDVV…TILPQRKGAV (192 aa). Residues 308–328 are compositionally biased toward basic and acidic residues; the sequence is EENRHELDSTHEEEKQDKENS. Residues 329 to 338 are compositionally biased toward polar residues; the sequence is TESTVNSVPH. Phosphoserine is present on S335.

This sequence belongs to the class IV-like SAM-binding methyltransferase superfamily. TRM10 family. As to quaternary structure, interacts with tRNA.

The protein localises to the nucleus. Its subcellular location is the nucleolus. The catalysed reaction is guanosine(9) in tRNA + S-adenosyl-L-methionine = N(1)-methylguanosine(9) in tRNA + S-adenosyl-L-homocysteine + H(+). Its function is as follows. S-adenosyl-L-methionine-dependent guanine N(1)-methyltransferase that catalyzes the formation of N(1)-methylguanine at position 9 (m1G9) in tRNAs. Probably not able to catalyze formation of N(1)-methyladenine at position 9 (m1A9) in tRNAs. This chain is tRNA methyltransferase 10 homolog A (TRMT10A), found in Bos taurus (Bovine).